Consider the following 117-residue polypeptide: Large ribosomal subunit protein uL18 (117 aa).

It belongs to the universal ribosomal protein uL18 family. As to quaternary structure, part of the 50S ribosomal subunit; part of the 5S rRNA/L5/L18/L25 subcomplex. Contacts the 5S and 23S rRNAs.

Its function is as follows. This is one of the proteins that bind and probably mediate the attachment of the 5S RNA into the large ribosomal subunit, where it forms part of the central protuberance. This is Large ribosomal subunit protein uL18 from Phytoplasma mali (strain AT).